The following is a 657-amino-acid chain: Interferon-induced GTP-binding protein Mx1 (657 aa).

Met-1 bears the N-acetylmethionine mark. Residues 63–336 (DLALPAIAVI…LITHICKTLP (274 aa)) enclose the Dynamin-type G domain. Residues 73-80 (GDQSSGKS) are G1 motif. 73-80 (GDQSSGKS) contributes to the GTP binding site. The tract at residues 98 to 100 (VTR) is G2 motif. The interval 174–177 (DLPG) is G3 motif. GTP-binding positions include 174–178 (DLPGI) and 243–246 (TKPD). The interval 243–246 (TKPD) is G4 motif. Residues 275 to 278 (KCRG) form a G5 motif region. Residues 337–362 (LLENQIKENHEKITEELQKYGSDVPE) are bundle signaling element (BSE). Positions 362-529 (EDEHEKMFFL…HFQMEQIVYC (168 aa)) are middle domain. Residues 363–627 (DEHEKMFFLI…KDTYSWLLKE (265 aa)) are stalk. Positions 540–551 (RVREKDSDEEKK) are enriched in basic and acidic residues. The disordered stretch occupies residues 540–559 (RVREKDSDEEKKKKTSSMSH). The interval 550–553 (KKKK) is critical for lipid-binding. The GED domain occupies 569–657 (LSEILEHLLA…ARRRLAKFPG (89 aa)).

This sequence belongs to the TRAFAC class dynamin-like GTPase superfamily. Dynamin/Fzo/YdjA family. Homooligomer. Oligomerizes into multimeric filamentous or ring-like structures by virtue of its stalk domain. Oligomerization is critical for GTPase activity, protein stability, and recognition of viral target structures. Interacts with TRPC1, TRPC3, TRPC4, TRPC5, TRPC6 and TRPC7. Interacts with HSPA5. Interacts with TUBB/TUBB5. Interacts with DDX39A and DDX39B. ISGylated.

It localises to the cytoplasm. Its subcellular location is the endoplasmic reticulum membrane. The protein localises to the perinuclear region. Functionally, interferon-induced dynamin-like GTPase with antiviral activity. The protein is Interferon-induced GTP-binding protein Mx1 (MX1) of Canis lupus familiaris (Dog).